The following is a 506-amino-acid chain: Acrylate reductase flavoprotein subunit (506 aa).

The segment at residues 1-30 (MSNKDLLGRRNFIKGMGAAAGVAMAAPALA) is a signal peptide (tat-type signal). FAD contacts are provided by Ala-54, Glu-74, Asn-82, Gly-87, and Gly-88. The active-site Proton donor is Arg-333. The FAD site is built by Glu-473 and Ile-489.

Belongs to the FAD-dependent oxidoreductase 2 family. FRD/SDH subfamily. In terms of assembly, the ArdAB flavocytochrome c is composed of a FAD-containing subunit (ArdA) and a heme c-containing subunit (ArdB). It depends on FAD as a cofactor. Post-translationally, predicted to be exported by the Tat system. The position of the signal peptide cleavage has not been experimentally proven.

The protein resides in the periplasm. Its activity is regulated as follows. Methacrylate acts as a competitive inhibitor of the acrylate reductase activity and suppresses the reductase activity in dose-dependent manner. Its function is as follows. FAD-containing subunit of the ArdAB flavocytochrome c, which catalyzes the reduction of acrylate to propanoate and supports dimethylsulfoniopropionate-dependent anaerobic respiration. In vitro, can use the artificial electron donor methyl viologen. The natural electron donor is probably a low-potential cytochrome c. Also shows weak activity toward methacrylate in vitro (at a 22-fold lower rate) but cannot use other tested 2-enoates, including crotonic, fumaric, sorbic, urocanic, cinnamic, p-coumaric, caffeic or ferulic acids. The protein catalyzes a unidirectional reaction and cannot oxidize propanoate with phenazine metasulfate and dichlorophenolindophenol as electron acceptors. The protein is Acrylate reductase flavoprotein subunit of Shewanella woodyi (strain ATCC 51908 / MS32).